A 351-amino-acid chain; its full sequence is Holliday junction branch migration complex subunit RuvB (351 aa).

Positions 1–186 (MDEKIETRLI…FGIVQRLEFY (186 aa)) are large ATPase domain (RuvB-L). ATP-binding positions include Ile25, Arg26, Gly67, Lys70, Thr71, Thr72, 133 to 135 (EDF), Arg176, Tyr186, and Arg223. A Mg(2+)-binding site is contributed by Thr71. Residues 187–257 (RIPDLIHIVK…IAKEALDLLN (71 aa)) are small ATPAse domain (RuvB-S). Residues 260-351 (IRGLDVMDRK…ENFDLLGKVE (92 aa)) are head domain (RuvB-H). Positions 296, 315, and 320 each coordinate DNA.

It belongs to the RuvB family. In terms of assembly, homohexamer. Forms an RuvA(8)-RuvB(12)-Holliday junction (HJ) complex. HJ DNA is sandwiched between 2 RuvA tetramers; dsDNA enters through RuvA and exits via RuvB. An RuvB hexamer assembles on each DNA strand where it exits the tetramer. Each RuvB hexamer is contacted by two RuvA subunits (via domain III) on 2 adjacent RuvB subunits; this complex drives branch migration. In the full resolvosome a probable DNA-RuvA(4)-RuvB(12)-RuvC(2) complex forms which resolves the HJ.

It localises to the cytoplasm. It carries out the reaction ATP + H2O = ADP + phosphate + H(+). Functionally, the RuvA-RuvB-RuvC complex processes Holliday junction (HJ) DNA during genetic recombination and DNA repair, while the RuvA-RuvB complex plays an important role in the rescue of blocked DNA replication forks via replication fork reversal (RFR). RuvA specifically binds to HJ cruciform DNA, conferring on it an open structure. The RuvB hexamer acts as an ATP-dependent pump, pulling dsDNA into and through the RuvAB complex. RuvB forms 2 homohexamers on either side of HJ DNA bound by 1 or 2 RuvA tetramers; 4 subunits per hexamer contact DNA at a time. Coordinated motions by a converter formed by DNA-disengaged RuvB subunits stimulates ATP hydrolysis and nucleotide exchange. Immobilization of the converter enables RuvB to convert the ATP-contained energy into a lever motion, pulling 2 nucleotides of DNA out of the RuvA tetramer per ATP hydrolyzed, thus driving DNA branch migration. The RuvB motors rotate together with the DNA substrate, which together with the progressing nucleotide cycle form the mechanistic basis for DNA recombination by continuous HJ branch migration. Branch migration allows RuvC to scan DNA until it finds its consensus sequence, where it cleaves and resolves cruciform DNA. In Coxiella burnetii (strain RSA 331 / Henzerling II), this protein is Holliday junction branch migration complex subunit RuvB.